A 279-amino-acid polypeptide reads, in one-letter code: Putative colanic acid biosynthesis glycosyl transferase WcaA (279 aa).

To R.meliloti ExoO.

It participates in slime biogenesis; slime polysaccharide biosynthesis. The sequence is that of Putative colanic acid biosynthesis glycosyl transferase WcaA (wcaA) from Escherichia coli (strain K12).